An 800-amino-acid polypeptide reads, in one-letter code: Mitochondrial intermediate peptidase (800 aa).

Residues 1 to 23 (MAGHMLMPLRRRPWTCRACLQRL) constitute a mitochondrion transit peptide. The segment covering 27–41 (RRSLETAASPSSQSD) has biased composition (polar residues). A disordered region spans residues 27 to 59 (RRSLETAASPSSQSDVYDYAPTNHSTQKKSNDE). Histidine 563 is a Zn(2+) binding site. Residue glutamate 564 is part of the active site. Positions 567 and 570 each coordinate Zn(2+).

It belongs to the peptidase M3 family. It depends on Zn(2+) as a cofactor.

The protein localises to the mitochondrion matrix. The enzyme catalyses Release of an N-terminal octapeptide as second stage of processing of some proteins imported into the mitochondrion.. In terms of biological role, cleaves proteins, imported into the mitochondrion, to their mature size. While most mitochondrial precursor proteins are processed to the mature form in one step by mitochondrial processing peptidase (MPP), the sequential cleavage by MIP of an octapeptide after initial processing by MPP is a required step for a subgroup of nuclear-encoded precursor proteins destined for the matrix or the inner membrane. This chain is Mitochondrial intermediate peptidase (oct1), found in Aspergillus oryzae (strain ATCC 42149 / RIB 40) (Yellow koji mold).